Consider the following 430-residue polypeptide: Corticosteroid-binding globulin (430 aa).

A signal peptide spans 1–22 (MLLTLYTCLLWLSTSGLWTIQA). Asn119, Asn175, and Asn243 each carry an N-linked (GlcNAc...) asparagine glycan. Gln253 contacts cortisol. Asn259 carries an N-linked (GlcNAc...) asparagine glycan. Position 285 (Gln285) interacts with cortisol. N-linked (GlcNAc...) asparagine glycosylation is present at Asn326. Trp392 is a binding site for cortisol.

Belongs to the serpin family. Expressed by the liver; secreted in plasma.

The protein resides in the secreted. In terms of biological role, major transport protein for glucocorticoids and progestins in the blood of almost all vertebrate species. The protein is Corticosteroid-binding globulin (SERPINA6) of Ovis aries (Sheep).